The chain runs to 86 residues: Myosin light chain alkali (86 aa).

The EF-hand domain occupies 11-46 (GCYEDFIECLKLYDKEENGTMMLAELQHALLALGES).

As to quaternary structure, myosin is a hexamer of 2 heavy chains and 4 light chains.

The polypeptide is Myosin light chain alkali (Mlc1) (Drosophila subobscura (Fruit fly)).